The sequence spans 619 residues: Elongation factor 4 (619 aa).

Positions 17 to 198 (SVIRNFCIIA…RVVRAIPGPE (182 aa)) constitute a tr-type G domain. GTP-binding positions include 29–34 (DHGKST) and 145–148 (NKID).

This sequence belongs to the TRAFAC class translation factor GTPase superfamily. Classic translation factor GTPase family. LepA subfamily.

Its subcellular location is the cell membrane. It carries out the reaction GTP + H2O = GDP + phosphate + H(+). In terms of biological role, required for accurate and efficient protein synthesis under certain stress conditions. May act as a fidelity factor of the translation reaction, by catalyzing a one-codon backward translocation of tRNAs on improperly translocated ribosomes. Back-translocation proceeds from a post-translocation (POST) complex to a pre-translocation (PRE) complex, thus giving elongation factor G a second chance to translocate the tRNAs correctly. Binds to ribosomes in a GTP-dependent manner. In Micrococcus luteus (strain ATCC 4698 / DSM 20030 / JCM 1464 / CCM 169 / CCUG 5858 / IAM 1056 / NBRC 3333 / NCIMB 9278 / NCTC 2665 / VKM Ac-2230) (Micrococcus lysodeikticus), this protein is Elongation factor 4.